A 729-amino-acid chain; its full sequence is Kinesin-like protein KAR3 (729 aa).

A disordered region spans residues 1–48; it reads MESLPRTPTKGRSTQHLSTPSPKNDILAMNGHKRRNTTTPPPKHTLLK. The tract at residues 1-109 is globular; that stretch reads MESLPRTPTK…ENVNELNRTQ (109 aa). The segment covering 10–22 has biased composition (polar residues); sequence KGRSTQHLSTPSP. Positions 110-357 form a coiled coil; that stretch reads AILFEKKATL…LEEYIKDTEL (248 aa). Asn-386, Arg-388, Arg-392, Glu-454, Gly-477, Ser-478, Gly-479, Lys-480, Thr-481, Phe-482, Glu-554, Lys-579, and Thr-694 together coordinate ATP. One can recognise a Kinesin motor domain in the interval 386-723; that stretch reads NIRVYCRIRP…LRFASKVNST (338 aa).

This sequence belongs to the TRAFAC class myosin-kinesin ATPase superfamily. Kinesin family. NCD subfamily. As to quaternary structure, interacts with CIK1; the interaction is direct. Interacts with VIK1; the interaction is direct.

The protein resides in the cytoplasm. Its subcellular location is the cytoskeleton. It is found in the microtubule organizing center. It localises to the spindle pole body. The protein localises to the nucleus. The protein resides in the chromosome. Its subcellular location is the spindle. It catalyses the reaction ATP + H2O = ADP + phosphate + H(+). The enzyme catalyses ATP + H2O + a kinesin associated with a microtubule at position (n) = ADP + phosphate + a kinesin associated with a microtubule at position (n-1, toward the minus end).. Functionally, minus end-directed microtubule (MT) motor involved in spindle midzone assembly, poleward transport of newly captured kinetochores along the lateral side of MTs, karyogamy (nuclear fusion) during mating, and with an essential function in meiosis I. Functions together with the accessory proteins CIK1 or VIK1. Drives the poleward transport of newly captured kinetochores along the lateral side of MTs, both during S-phase and during M-phase. To contribute to spindle midzone assembly during mitotic metaphase, the nuclear KAR3-CIK1 motor cross-links anti-parallel microtubules to align them on the spindle axis; as the motor travels polewards splayed microtubules are pulled into alignment. During the karyogamy (nuclear fusion) step of mating, KAR3-CIK1 cross-links antiparallel cytoplasmic microtubules emanating from the spindle pole bodies of mating partners; the motor activity of KAR3 creates the force that pulls the nuclei together by sliding cross-linked microtubules past one another. KAR3-CIK1 promotes microtubule shortening predominantly from the microtubule plus-end. Together with cytoplasmic VIK1, may act to stabilize microtubules. Requires accessory protein VIK1 for spindle pole body localization and to allow the CIN8 and KIP1 motors to generate outwardly directed spindle forces. Essential during meiosis I. The ATPase activity is stimulated by microtubule-binding. The protein is Kinesin-like protein KAR3 (KAR3) of Saccharomyces cerevisiae (strain ATCC 204508 / S288c) (Baker's yeast).